The following is a 159-amino-acid chain: Eukaryotic translation initiation factor 5A (159 aa).

Lys-51 is subject to Hypusine.

Belongs to the eIF-5A family. In terms of processing, lys-51 undergoes hypusination, a unique post-translational modification that consists in the addition of a butylamino group from spermidine to lysine side chain, leading to the formation of the unusual amino acid hypusine. eIF-5As are the only known proteins to undergo this modification, which is essential for their function.

Its subcellular location is the cytoplasm. In terms of biological role, translation factor that promotes translation elongation and termination, particularly upon ribosome stalling at specific amino acid sequence contexts. Binds between the exit (E) and peptidyl (P) site of the ribosome and promotes rescue of stalled ribosome: specifically required for efficient translation of polyproline-containing peptides as well as other motifs that stall the ribosome. Acts as a ribosome quality control (RQC) cofactor by joining the RQC complex to facilitate peptidyl transfer during CAT tailing step. Functions as a regulator of autophagy. This is Eukaryotic translation initiation factor 5A from Drosophila melanogaster (Fruit fly).